Reading from the N-terminus, the 166-residue chain is 3-hydroxyacyl-[acyl-carrier-protein] dehydratase FabZ (166 aa).

H72 is an active-site residue.

It belongs to the thioester dehydratase family. FabZ subfamily.

Its subcellular location is the cytoplasm. The enzyme catalyses a (3R)-hydroxyacyl-[ACP] = a (2E)-enoyl-[ACP] + H2O. In terms of biological role, involved in unsaturated fatty acids biosynthesis. Catalyzes the dehydration of short chain beta-hydroxyacyl-ACPs and long chain saturated and unsaturated beta-hydroxyacyl-ACPs. This is 3-hydroxyacyl-[acyl-carrier-protein] dehydratase FabZ from Synechococcus sp. (strain JA-2-3B'a(2-13)) (Cyanobacteria bacterium Yellowstone B-Prime).